The following is a 260-amino-acid chain: ATP synthase subunit a (260 aa).

The next 7 membrane-spanning stretches (helical) occupy residues Ile30–Val50, Leu96–Val116, Phe125–Ala145, Phe151–Ile171, Leu187–Ser207, Val213–Leu233, and Glu234–Asn254.

This sequence belongs to the ATPase A chain family. F-type ATPases have 2 components, CF(1) - the catalytic core - and CF(0) - the membrane proton channel. CF(1) has five subunits: alpha(3), beta(3), gamma(1), delta(1), epsilon(1). CF(0) has three main subunits: a(1), b(2) and c(9-12). The alpha and beta chains form an alternating ring which encloses part of the gamma chain. CF(1) is attached to CF(0) by a central stalk formed by the gamma and epsilon chains, while a peripheral stalk is formed by the delta and b chains.

It is found in the cell inner membrane. Functionally, key component of the proton channel; it plays a direct role in the translocation of protons across the membrane. This Novosphingobium aromaticivorans (strain ATCC 700278 / DSM 12444 / CCUG 56034 / CIP 105152 / NBRC 16084 / F199) protein is ATP synthase subunit a.